Reading from the N-terminus, the 226-residue chain is Protein GrpE (226 aa).

2 disordered regions span residues 1–24 (MADE…PRDR) and 205–226 (GVSK…EDNA). Residues 217–226 (NGASTSEDNA) show a composition bias toward polar residues.

This sequence belongs to the GrpE family. In terms of assembly, homodimer.

It is found in the cytoplasm. Its function is as follows. Participates actively in the response to hyperosmotic and heat shock by preventing the aggregation of stress-denatured proteins, in association with DnaK and GrpE. It is the nucleotide exchange factor for DnaK and may function as a thermosensor. Unfolded proteins bind initially to DnaJ; upon interaction with the DnaJ-bound protein, DnaK hydrolyzes its bound ATP, resulting in the formation of a stable complex. GrpE releases ADP from DnaK; ATP binding to DnaK triggers the release of the substrate protein, thus completing the reaction cycle. Several rounds of ATP-dependent interactions between DnaJ, DnaK and GrpE are required for fully efficient folding. The chain is Protein GrpE from Brucella melitensis biotype 1 (strain ATCC 23456 / CCUG 17765 / NCTC 10094 / 16M).